A 280-amino-acid polypeptide reads, in one-letter code: Probable endonuclease 4 (280 aa).

Zn(2+)-binding residues include H68, H108, E143, D177, H180, H214, D227, H229, and E259.

Belongs to the AP endonuclease 2 family. The cofactor is Zn(2+).

It carries out the reaction Endonucleolytic cleavage to 5'-phosphooligonucleotide end-products.. Functionally, endonuclease IV plays a role in DNA repair. It cleaves phosphodiester bonds at apurinic or apyrimidinic (AP) sites, generating a 3'-hydroxyl group and a 5'-terminal sugar phosphate. The sequence is that of Probable endonuclease 4 from Cenarchaeum symbiosum (strain A).